We begin with the raw amino-acid sequence, 307 residues long: UDP-3-O-acyl-N-acetylglucosamine deacetylase (307 aa).

Zn(2+) contacts are provided by His-78, His-241, and Asp-245. Catalysis depends on His-268, which acts as the Proton donor.

Belongs to the LpxC family. The cofactor is Zn(2+).

It carries out the reaction a UDP-3-O-[(3R)-3-hydroxyacyl]-N-acetyl-alpha-D-glucosamine + H2O = a UDP-3-O-[(3R)-3-hydroxyacyl]-alpha-D-glucosamine + acetate. Its pathway is glycolipid biosynthesis; lipid IV(A) biosynthesis; lipid IV(A) from (3R)-3-hydroxytetradecanoyl-[acyl-carrier-protein] and UDP-N-acetyl-alpha-D-glucosamine: step 2/6. Catalyzes the hydrolysis of UDP-3-O-myristoyl-N-acetylglucosamine to form UDP-3-O-myristoylglucosamine and acetate, the committed step in lipid A biosynthesis. The polypeptide is UDP-3-O-acyl-N-acetylglucosamine deacetylase (Polaromonas sp. (strain JS666 / ATCC BAA-500)).